Consider the following 201-residue polypeptide: Arachin 25 kDa protein (201 aa).

This is one of six apparently different protein chains that constitute the peanut protein arachin.

The chain is Arachin 25 kDa protein from Arachis hypogaea (Peanut).